The sequence spans 193 residues: A-type ATP synthase subunit E (193 aa).

This sequence belongs to the V-ATPase E subunit family. Has multiple subunits with at least A(3), B(3), C, D, E, F, H, I and proteolipid K(x).

The protein localises to the cell membrane. Functionally, component of the A-type ATP synthase that produces ATP from ADP in the presence of a proton gradient across the membrane. The protein is A-type ATP synthase subunit E of Haloquadratum walsbyi (strain DSM 16790 / HBSQ001).